The following is an 804-amino-acid chain: Leucine--tRNA ligase (804 aa).

The 'HIGH' region motif lies at 39 to 50; sequence PYPSGAGLHVGH. The short motif at 580–584 is the 'KMSKS' region element; that stretch reads KMSKS. Lysine 583 provides a ligand contact to ATP.

Belongs to the class-I aminoacyl-tRNA synthetase family.

It is found in the cytoplasm. The catalysed reaction is tRNA(Leu) + L-leucine + ATP = L-leucyl-tRNA(Leu) + AMP + diphosphate. In Mycoplasma mycoides subsp. mycoides SC (strain CCUG 32753 / NCTC 10114 / PG1), this protein is Leucine--tRNA ligase.